The primary structure comprises 404 residues: Glucose-1-phosphate adenylyltransferase (404 aa).

Residues Tyr99, Gly164, 179–180 (EK), and Ser197 each bind alpha-D-glucose 1-phosphate.

Belongs to the bacterial/plant glucose-1-phosphate adenylyltransferase family.

It carries out the reaction alpha-D-glucose 1-phosphate + ATP + H(+) = ADP-alpha-D-glucose + diphosphate. It functions in the pathway capsule biogenesis; capsule polysaccharide biosynthesis. It participates in glycan biosynthesis; glycogen biosynthesis. Its function is as follows. Involved in the biosynthesis of ADP-glucose, a building block, required in the biosynthesis of maltose-1-phosphate (M1P) and in the elongation reactions to produce linear alpha-1,4-glucans. Catalyzes the reaction between ATP and alpha-D-glucose 1-phosphate (G1P) to produce pyrophosphate and ADP-Glc. This is Glucose-1-phosphate adenylyltransferase from Mycobacterium leprae (strain Br4923).